Consider the following 261-residue polypeptide: Methylmalonyl-CoA decarboxylase (261 aa).

Substrate is bound by residues 64–68, G110, T132, and K253; that span reads AGHDI.

It belongs to the enoyl-CoA hydratase/isomerase family. In terms of assembly, dimer of homotrimers.

The catalysed reaction is (R)-methylmalonyl-CoA + H(+) = propanoyl-CoA + CO2. Catalyzes the decarboxylation of (R)-methylmalonyl-CoA to propionyl-CoA. Could be part of a pathway that converts succinate to propanoate. The polypeptide is Methylmalonyl-CoA decarboxylase (scpB) (Escherichia coli (strain K12)).